The primary structure comprises 411 residues: LIM domain-binding protein 1 (411 aa).

2 disordered regions span residues 284 to 330 and 367 to 411; these read PPAE…TFAL and DAAN…QASQ. Residues 302–318 show a composition bias toward low complexity; that stretch reads SGGSTMSSGGGNTNNSN. The LIM interaction domain (LID) domain occupies 336–375; it reads DVMVVGEPTLMGGEFGDEDERLITRLENTQFDAANGIDDE.

Belongs to the LDB family. As to quaternary structure, forms homodimers and heterodimers. In terms of tissue distribution, first expressed at stages 15-16 in presumptive limb mesoderm. As limb outgrowth proceeds, expressed in the entire limb bud, concentrating in the distal mesoderm throughout limb development. Both hindlimbs and forelimbs exhibit similar expression patterns.

Its subcellular location is the nucleus. Binds to the LIM domain of a wide variety of LIM domain-containing transcription factors. The polypeptide is LIM domain-binding protein 1 (Gallus gallus (Chicken)).